Here is a 290-residue protein sequence, read N- to C-terminus: 4-hydroxybenzoate octaprenyltransferase (290 aa).

8 helical membrane-spanning segments follow: residues 33-53, 91-111, 116-136, 138-158, 165-185, 212-232, 237-257, and 269-289; these read LAAL…AVFV, LGVR…FVLV, WEAV…PFTK, FFAM…VIAF, VPAT…AYDT, VAAI…VLAP, WPLW…FTLI, and FSKS…GYLL.

The protein belongs to the UbiA prenyltransferase family. Mg(2+) is required as a cofactor.

The protein resides in the cell inner membrane. It carries out the reaction all-trans-octaprenyl diphosphate + 4-hydroxybenzoate = 4-hydroxy-3-(all-trans-octaprenyl)benzoate + diphosphate. It participates in cofactor biosynthesis; ubiquinone biosynthesis. Its function is as follows. Catalyzes the prenylation of para-hydroxybenzoate (PHB) with an all-trans polyprenyl group. Mediates the second step in the final reaction sequence of ubiquinone-8 (UQ-8) biosynthesis, which is the condensation of the polyisoprenoid side chain with PHB, generating the first membrane-bound Q intermediate 3-octaprenyl-4-hydroxybenzoate. This Acidovorax ebreus (strain TPSY) (Diaphorobacter sp. (strain TPSY)) protein is 4-hydroxybenzoate octaprenyltransferase.